We begin with the raw amino-acid sequence, 1038 residues long: Eukaryotic translation initiation factor 3 subunit A (1038 aa).

A coiled-coil region spans residues 92 to 121 (LKKFIELAEKKVTEAQAKADEIQSSLESAA). A PCI domain is found at 339–523 (MTKAVSFVLL…GVLTFDTDVF (185 aa)). The stretch at 611 to 899 (IDKKKEAATD…QKQREEEAEA (289 aa)) forms a coiled coil. Basic and acidic residues-rich tracts occupy residues 621-632 (ALQRKQREEETR) and 800-901 (RHEE…EARR). Disordered stretches follow at residues 621–641 (ALQR…QQLQ) and 800–1038 (RHEE…QQGQ). 2 stretches are compositionally biased toward low complexity: residues 943 to 952 (KEAAGGAAPE) and 976 to 993 (GASA…AAPS). Residues 1002–1019 (DSGSSTPPSRTQTPATTS) are compositionally biased toward polar residues.

It belongs to the eIF-3 subunit A family. In terms of assembly, component of the eukaryotic translation initiation factor 3 (eIF-3) complex.

Its subcellular location is the cytoplasm. Functionally, RNA-binding component of the eukaryotic translation initiation factor 3 (eIF-3) complex, which is involved in protein synthesis of a specialized repertoire of mRNAs and, together with other initiation factors, stimulates binding of mRNA and methionyl-tRNAi to the 40S ribosome. The eIF-3 complex specifically targets and initiates translation of a subset of mRNAs involved in cell proliferation. This chain is Eukaryotic translation initiation factor 3 subunit A (tif32), found in Aspergillus oryzae (strain ATCC 42149 / RIB 40) (Yellow koji mold).